Reading from the N-terminus, the 527-residue chain is Inorganic phosphate transporter 1-1 (527 aa).

Residues 1–21 (MAGGQLNVLSTLDQAKTQWYH) are Cytoplasmic-facing. A helical membrane pass occupies residues 22–42 (FMAIVIAGMGFFTDAYDLFCI). Residues 43 to 70 (SLVTKLLGRIYYTDDSKDTPGALPPNVS) lie on the Extracellular side of the membrane. A helical membrane pass occupies residues 71-91 (AAVTGVALCGTLAGQLFFGWL). Topologically, residues 92 to 99 (GDKLGRKS) are cytoplasmic. The helical transmembrane segment at 100-120 (VYGFTLILMVVCSVASGLSFG) threads the bilayer. Residues 121-124 (SSAK) are Extracellular-facing. Residues 125 to 145 (GVVSTLCFFRFWLGFGIGGDY) traverse the membrane as a helical segment. Over 146–163 (PLSATIMSEYANKRTRGA) the chain is Cytoplasmic. A helical membrane pass occupies residues 164-184 (FIAAVFAMQGFGILFGAIVAL). Residues 185 to 211 (AVSAGFRHAYPAPSYSDNHAASLVPQA) lie on the Extracellular side of the membrane. Residues 212–232 (DYVWRIILMFGTVPAALTYYW) traverse the membrane as a helical segment. Over 233–292 (RMKMPETARYTALIARNAKQAAADMSKVLHTQIEESADRAETVAVGGESWGLFSRQFLRR) the chain is Cytoplasmic. A helical membrane pass occupies residues 293-313 (HGLHLLATTSTWFLLDIAFYS). At 314-348 (QNLFQKDIFSKVGWIPPAKTMNALEELYRIARAQA) the chain is on the extracellular side. The chain crosses the membrane as a helical span at residues 349 to 369 (LIALCGTIPGYWFTVAFIEIM). The Cytoplasmic segment spans residues 370-371 (GR). Residues 372-392 (FWIQIMGFAMMTAFMLGLAIP) traverse the membrane as a helical segment. Topologically, residues 393–405 (YHHWTTPGHHTGF) are extracellular. Residues 406 to 426 (IVMYGFTFFFANFGPNSTTFI) traverse the membrane as a helical segment. Topologically, residues 427-442 (VPAEIYPARLRSTCHG) are cytoplasmic. Residues 443–463 (ISAAAGKAGAIIGAFGFLYAA) traverse the membrane as a helical segment. Residues 464 to 481 (QDQHKPEPGYPRGIGIKN) lie on the Extracellular side of the membrane. A helical membrane pass occupies residues 482–502 (ALFVLAGTNFLGTIMTLLVPE). Residues 503 to 527 (SKGMSLEVISQEVADGDDEEAAYPK) lie on the Cytoplasmic side of the membrane.

Belongs to the major facilitator superfamily. Phosphate:H(+) symporter (TC 2.A.1.9) family. In terms of tissue distribution, expressed in roots, stems and leaves.

Its subcellular location is the membrane. High-affinity transporter for external inorganic phosphate. Required for phosphate acquisition in plant. This chain is Inorganic phosphate transporter 1-1 (PHT1-1), found in Oryza sativa subsp. japonica (Rice).